The sequence spans 125 residues: Holo-[acyl-carrier-protein] synthase (125 aa).

D8 and E55 together coordinate Mg(2+).

This sequence belongs to the P-Pant transferase superfamily. AcpS family. Mg(2+) serves as cofactor.

Its subcellular location is the cytoplasm. The catalysed reaction is apo-[ACP] + CoA = holo-[ACP] + adenosine 3',5'-bisphosphate + H(+). In terms of biological role, transfers the 4'-phosphopantetheine moiety from coenzyme A to a Ser of acyl-carrier-protein. In Treponema pallidum (strain Nichols), this protein is Holo-[acyl-carrier-protein] synthase.